The primary structure comprises 431 residues: Divalent metal cation transporter MntH (431 aa).

The next 12 helical transmembrane spans lie at 30 to 50, 63 to 83, 106 to 126, 137 to 159, 169 to 189, 209 to 229, 257 to 277, 287 to 307, 309 to 329, 341 to 361, 367 to 387, and 405 to 425; these read WSWT…IDPG, GYTL…IQTL, PLVW…DLAE, LFGL…ALHL, ILIG…LVLS, YALY…VIYL, VILG…MAAA, VATI…VTAS, VFGL…TLSG, IPLW…IMLG, ALVA…VPLL, and VTGV…YVLF.

This sequence belongs to the NRAMP family.

It is found in the cell inner membrane. H(+)-stimulated, divalent metal cation uptake system. The chain is Divalent metal cation transporter MntH from Chromohalobacter salexigens (strain ATCC BAA-138 / DSM 3043 / CIP 106854 / NCIMB 13768 / 1H11).